Reading from the N-terminus, the 249-residue chain is DNA repair protein RecO (249 aa).

Belongs to the RecO family.

Its function is as follows. Involved in DNA repair and RecF pathway recombination. The sequence is that of DNA repair protein RecO from Desulforudis audaxviator (strain MP104C).